Reading from the N-terminus, the 168-residue chain is Disulfide bond formation protein B 2 (168 aa).

Topologically, residues 1–9 are cytoplasmic; it reads MSLACLRSF. Residues 10-26 traverse the membrane as a helical segment; it reads FLPALLASTAVLVASFH. Residues 27-44 lie on the Periplasmic side of the membrane; the sequence is LESVVGLVPCALCFSQRL. Cys36 and Cys39 form a disulfide bridge. Residues 45–61 traverse the membrane as a helical segment; that stretch reads MLGVYALVCLAALVHSP. The Cytoplasmic segment spans residues 62 to 67; that stretch reads AARGRR. Residues 68-85 form a helical membrane-spanning segment; it reads AYAGLALASAFGGALLAG. Topologically, residues 86 to 140 are periplasmic; the sequence is RHVWLQGDPQVVDGCHLPVEQVLQRPLGEILQMFLLGSPDCVSISWSFLDLTLPE. A disulfide bridge connects residues Cys100 and Cys126. Residues 141–159 traverse the membrane as a helical segment; it reads WSLLAFLLLAAMPLSWLVA. At 160 to 168 the chain is on the cytoplasmic side; sequence YRFRKRAMA.

It belongs to the DsbB family.

It is found in the cell inner membrane. In terms of biological role, required for disulfide bond formation in some periplasmic proteins. Acts by oxidizing the DsbA protein. This chain is Disulfide bond formation protein B 2, found in Pseudomonas entomophila (strain L48).